Consider the following 153-residue polypeptide: D-aminoacyl-tRNA deacylase (153 aa).

The short motif at 137 to 138 is the Gly-cisPro motif, important for rejection of L-amino acids element; the sequence is GP.

Belongs to the DTD family. In terms of assembly, homodimer.

It is found in the cytoplasm. It catalyses the reaction glycyl-tRNA(Ala) + H2O = tRNA(Ala) + glycine + H(+). The enzyme catalyses a D-aminoacyl-tRNA + H2O = a tRNA + a D-alpha-amino acid + H(+). Functionally, an aminoacyl-tRNA editing enzyme that deacylates mischarged D-aminoacyl-tRNAs. Also deacylates mischarged glycyl-tRNA(Ala), protecting cells against glycine mischarging by AlaRS. Acts via tRNA-based rather than protein-based catalysis; rejects L-amino acids rather than detecting D-amino acids in the active site. By recycling D-aminoacyl-tRNA to D-amino acids and free tRNA molecules, this enzyme counteracts the toxicity associated with the formation of D-aminoacyl-tRNA entities in vivo and helps enforce protein L-homochirality. This Dehalococcoides mccartyi (strain ATCC BAA-2100 / JCM 16839 / KCTC 5957 / BAV1) protein is D-aminoacyl-tRNA deacylase.